Reading from the N-terminus, the 580-residue chain is Peptidyl-prolyl cis-trans isomerase-like 2 (580 aa).

In terms of domain architecture, U-box spans 42–115; the sequence is KRLPFRFCSL…GEYIDPVTYK (74 aa). 5 disordered regions span residues 182–201, 227–259, 439–459, 479–530, and 553–580; these read IKEGESGLSDEQLREREDPS, QERAQKAGNAASTPVAKTDAPVKSAQKTASYQS, SPTLNKLETHPVNPTTNRPTP, QKKQ…SSTT, and FVDEEPTSEPAKKKFKGIGGFGDFSSWD. The PPIase cyclophilin-type domain occupies 309–468; the sequence is QKGYARISTT…PDIRIVDVTI (160 aa). A compositionally biased stretch (polar residues) spans 439-457; that stretch reads SPTLNKLETHPVNPTTNRP. Positions 490–507 are enriched in basic and acidic residues; it reads EANRTAENDEEGSRRAED.

Belongs to the cyclophilin-type PPIase family. PPIL2 subfamily.

Its subcellular location is the nucleus. It catalyses the reaction [protein]-peptidylproline (omega=180) = [protein]-peptidylproline (omega=0). The enzyme catalyses S-ubiquitinyl-[E2 ubiquitin-conjugating enzyme]-L-cysteine + [acceptor protein]-L-lysine = [E2 ubiquitin-conjugating enzyme]-L-cysteine + N(6)-ubiquitinyl-[acceptor protein]-L-lysine.. It functions in the pathway protein modification; protein ubiquitination. In terms of biological role, may catalyze the cis-trans isomerization of proline imidic peptide bonds in oligopeptides thereby assisting the folding of proteins. May also function as a chaperone, playing a role in intracellular transport of proteins. May also have a protein ubiquitin ligase activity acting as an E3 ubiquitin protein ligase or as a ubiquitin-ubiquitin ligase promoting elongation of ubiquitin chains on proteins. This chain is Peptidyl-prolyl cis-trans isomerase-like 2 (cyp8), found in Emericella nidulans (strain FGSC A4 / ATCC 38163 / CBS 112.46 / NRRL 194 / M139) (Aspergillus nidulans).